A 754-amino-acid chain; its full sequence is Phosphoinositide 3-kinase regulatory subunit 6 (754 aa).

The tract at residues 343–363 (ERDLPTGADELPAPGSPEMER) is disordered.

In terms of assembly, heterodimer of a catalytic subunit (PIK3CG) and a regulatory (PIK3R6) subunit. The binding of PIK3R6 to PIK3CG may exclude the binding of PIK3R5 to PIK3CG. Interacts with beta-gamma G protein dimers. Interacts with PDE3B and RAPGEF3; form a signaling complex that regulates phosphatidylinositol 3-kinase gamma in angiogenesis.

Its subcellular location is the cytoplasm. The protein resides in the cell membrane. Functionally, regulatory subunit of the PI3K gamma complex. Acts as an adapter to drive activation of PIK3CG by beta-gamma G protein dimers. The PIK3CG:PIK3R6 heterodimer is much less sensitive to beta-gamma G protein dimers than PIK3CG:PIK3R5 and its membrane recruitment and beta-gamma G protein dimer-dependent activation requires HRAS bound to PIK3CG. Recruits of the PI3K gamma complex to a PDE3B:RAPGEF3 signaling complex involved in angiogenesis; signaling seems to involve RRAS. This is Phosphoinositide 3-kinase regulatory subunit 6 (PIK3R6) from Homo sapiens (Human).